A 167-amino-acid polypeptide reads, in one-letter code: uncharacterized protein (167 aa).

Positions 140–167 (SSEEKKKKKKKKKEKSLHTEREKKKKKF) are disordered. A compositionally biased stretch (basic residues) spans 145–154 (KKKKKKKKEK).

This is an uncharacterized protein from Saccharomyces cerevisiae (strain ATCC 204508 / S288c) (Baker's yeast).